Consider the following 174-residue polypeptide: uncharacterized protein (174 aa).

Belongs to the IIV-6 196R family.

This is an uncharacterized protein from Acheta domesticus (House cricket).